Consider the following 308-residue polypeptide: Acetylglutamate kinase (308 aa).

Substrate is bound by residues G86–G87, R108, and N201.

This sequence belongs to the acetylglutamate kinase family. ArgB subfamily.

The protein resides in the cytoplasm. It carries out the reaction N-acetyl-L-glutamate + ATP = N-acetyl-L-glutamyl 5-phosphate + ADP. Its pathway is amino-acid biosynthesis; L-arginine biosynthesis; N(2)-acetyl-L-ornithine from L-glutamate: step 2/4. Catalyzes the ATP-dependent phosphorylation of N-acetyl-L-glutamate. This is Acetylglutamate kinase from Prochlorococcus marinus (strain MIT 9303).